We begin with the raw amino-acid sequence, 56 residues long: uncharacterized protein (56 aa).

This is an uncharacterized protein from Haemophilus influenzae (strain ATCC 51907 / DSM 11121 / KW20 / Rd).